The primary structure comprises 694 residues: Polyribonucleotide nucleotidyltransferase (694 aa).

The Mg(2+) site is built by aspartate 486 and aspartate 492. A KH domain is found at 553–612 (PRIETMQIKPTKIASVIGPGGKQIRQIIEETGVQIDVNDLGVVSISASSASAINKAKEII). The S1 motif domain maps to 622–690 (GKTYRGRVTS…EKGQLKLSHK (69 aa)).

It belongs to the polyribonucleotide nucleotidyltransferase family. Requires Mg(2+) as cofactor.

It is found in the cytoplasm. It carries out the reaction RNA(n+1) + phosphate = RNA(n) + a ribonucleoside 5'-diphosphate. Its function is as follows. Involved in mRNA degradation. Catalyzes the phosphorolysis of single-stranded polyribonucleotides processively in the 3'- to 5'-direction. This Chlamydia pneumoniae (Chlamydophila pneumoniae) protein is Polyribonucleotide nucleotidyltransferase.